The primary structure comprises 155 residues: Protein-export protein SecB (155 aa).

Belongs to the SecB family. In terms of assembly, homotetramer, a dimer of dimers. One homotetramer interacts with 1 SecA dimer.

The protein localises to the cytoplasm. In terms of biological role, one of the proteins required for the normal export of preproteins out of the cell cytoplasm. It is a molecular chaperone that binds to a subset of precursor proteins, maintaining them in a translocation-competent state. It also specifically binds to its receptor SecA. This Vibrio vulnificus (strain CMCP6) protein is Protein-export protein SecB.